The chain runs to 439 residues: Arginine biosynthesis bifunctional protein ArgJ, mitochondrial (439 aa).

Positions 175, 201, 212, 301, 434, and 439 each coordinate substrate. Threonine 212 functions as the Nucleophile in the catalytic mechanism.

It belongs to the ArgJ family. Heterodimer of an alpha and a beta chain. The alpha and beta chains are autoproteolytically processed from a single precursor protein within the mitochondrion.

It is found in the mitochondrion matrix. The enzyme catalyses N(2)-acetyl-L-ornithine + L-glutamate = N-acetyl-L-glutamate + L-ornithine. It catalyses the reaction L-glutamate + acetyl-CoA = N-acetyl-L-glutamate + CoA + H(+). The protein operates within amino-acid biosynthesis; L-arginine biosynthesis; L-ornithine and N-acetyl-L-glutamate from L-glutamate and N(2)-acetyl-L-ornithine (cyclic): step 1/1. It functions in the pathway amino-acid biosynthesis; L-arginine biosynthesis; N(2)-acetyl-L-ornithine from L-glutamate: step 1/4. Functionally, catalyzes two activities which are involved in the cyclic version of arginine biosynthesis: the synthesis of acetylglutamate from glutamate and acetyl-CoA, and of ornithine by transacetylation between acetylornithine and glutamate. The sequence is that of Arginine biosynthesis bifunctional protein ArgJ, mitochondrial (ECM42) from Candida albicans (strain SC5314 / ATCC MYA-2876) (Yeast).